The following is a 211-amino-acid chain: Regulator of G-protein signaling 2 (211 aa).

Disordered stretches follow at residues 14-33 (RPMD…REKM) and 49-68 (LQNS…KQQA). Residues 32–66 (KMKRTLLKDWKTRLSYFLQNSSTPGKPKTGKKSKQ) form a necessary for membrane association region. The necessary to inhibit protein synthesis stretch occupies residues 79–116 (LWSEAFDELLASKYGLAAFRAFLKSEFCEENIEFWLAC). Residues 83–199 (AFDELLASKY…LESEFYQDLC (117 aa)) enclose the RGS domain.

Interacts with GNAQ. Does not interact with GNAI1 and GNAI3. Interacts with EIF2B5. Interacts with PRKG1 (isoform alpha). Post-translationally, phosphorylated by protein kinase C. Phosphorylation by PRKG1 leads to activation of RGS2 activity. Expressed in acute myelogenous leukemia (AML) and in acute lymphoblastic leukemia (ALL).

It localises to the cell membrane. The protein localises to the cytoplasm. The protein resides in the nucleus. It is found in the nucleolus. Its subcellular location is the mitochondrion. Functionally, regulates G protein-coupled receptor signaling cascades. Inhibits signal transduction by increasing the GTPase activity of G protein alpha subunits, thereby driving them into their inactive GDP-bound form. It is involved in the negative regulation of the angiotensin-activated signaling pathway. Plays a role in the regulation of blood pressure in response to signaling via G protein-coupled receptors and GNAQ. Plays a role in regulating the constriction and relaxation of vascular smooth muscle. Binds EIF2B5 and blocks its activity, thereby inhibiting the translation of mRNA into protein. The protein is Regulator of G-protein signaling 2 (RGS2) of Homo sapiens (Human).